The chain runs to 451 residues: Sex peptide receptor-related protein 2 (451 aa).

Residues 1-63 (MNYEVYCGNA…DNLEIVVYGQ (63 aa)) are Extracellular-facing. Residue Asn-15 is glycosylated (N-linked (GlcNAc...) asparagine). The chain crosses the membrane as a helical span at residues 64–84 (IFPILVLFAVFANAAVALVLS). Residues 85–97 (KKHMITPTNVVLK) are Cytoplasmic-facing. The chain crosses the membrane as a helical span at residues 98–118 (YMAIAELLVGLVPLPWTLFFF). The Extracellular portion of the chain corresponds to 119–140 (SMGNIKETHRLELWWCYLQKYS). A disulfide bond links Cys-134 and Cys-225. The helical transmembrane segment at 141-161 (MDAFPPVFHMIAMWLTVLLAA) threads the bilayer. Topologically, residues 162-183 (QRYVSISHPLHSRSACNVKNVR) are cytoplasmic. The chain crosses the membrane as a helical span at residues 184-204 (LATMIITVTSFLCGLPKSFDY). Residues 205–251 (EYETVHGWIYSHGNWTYASSCVMMPTAILTNMGQTVYFNIYFWTRAL) are Extracellular-facing. N-linked (GlcNAc...) asparagine glycosylation is present at Asn-218. A helical transmembrane segment spans residues 252–272 (GFIILPSFLLVLLNGLLIKGI). At 273 to 301 (RRAQRRKLRLLREKRSEEAARQRDSNSTS) the chain is on the cytoplasmic side. The helical transmembrane segment at 302–322 (LMLVAIVSIFLIVNLPQAIFM) threads the bilayer. The Extracellular segment spans residues 323–334 (GLLCVCETFTIK). Residues 335–355 (IPILEGTFPAVFLIASNMIVI) traverse the membrane as a helical segment. Topologically, residues 356-451 (ATYPINFGIY…TQFTTMDRSD (96 aa)) are cytoplasmic.

It belongs to the G-protein coupled receptor 1 family. As to expression, expressed in head neurons including the ASE sensory neurons and the ASI and AWB chemosensory neurons, the midbody neurons SDQ, and motor neurons in the tail.

The protein localises to the cell membrane. In terms of biological role, G-protein coupled receptor for the neuropeptide like protein nlp-38. Plays a role in several types of aversive gustatory associative learning including gustatory plasticity and salt avoidance learning. Its role in salt avoidance learning may be through activation of the transcription factor crh-1/CREB and de novo transcription and translation, which in turn promotes the formation of long-term memory. The chain is Sex peptide receptor-related protein 2 from Caenorhabditis elegans.